A 492-amino-acid polypeptide reads, in one-letter code: MTLWINGDWITGQGERRRKTNPVSAEILWQGNDANAAQVAEACQVARAAFPRWARQPFAARQAIVEKFAALLEAHKAELTEVIARETGKPRWEAATEVTAMINKIAISIKAYHARTGEQKSELVDGAATLRHRPHGVLAVFGPYNFPGHLPNGHIVPALLAGNTLIFKPSELTPWTGETVIKLWERAGLPAGVLNLVQGGRETGQALSSLDDLDGLLFTGSASTGYQLHRQLSGQPEKILALEMGGNNPLIIEDVANTDAAVHLTLQSAFITAGQRCTCARRLLVKQGAQGDAFLARLVDVAGRLQPGRWDDDPQPFIGGLISAQAAQHVMEAWRQREALGGRTLLAPRKVKEGTSLLTPGIIELTGVADVPDEEVFGPLLNVWRYAHFDEAIRLANNTRFGLSCGLVSTDRAQFEQLLLEARAGIVNWNKPLTGAASTAPFGGIGASGNHRPSAWYAADYCAWPMASLESPELTLPATLSPGLDFSLREAV.

220-225 serves as a coordination point for NAD(+); that stretch reads GSASTG. Catalysis depends on residues E243 and C277.

This sequence belongs to the aldehyde dehydrogenase family. AstD subfamily.

The catalysed reaction is N-succinyl-L-glutamate 5-semialdehyde + NAD(+) + H2O = N-succinyl-L-glutamate + NADH + 2 H(+). Its pathway is amino-acid degradation; L-arginine degradation via AST pathway; L-glutamate and succinate from L-arginine: step 4/5. Its function is as follows. Catalyzes the NAD-dependent reduction of succinylglutamate semialdehyde into succinylglutamate. This is N-succinylglutamate 5-semialdehyde dehydrogenase from Salmonella gallinarum (strain 287/91 / NCTC 13346).